Here is a 189-residue protein sequence, read N- to C-terminus: Elongation factor P (189 aa).

Belongs to the elongation factor P family.

It is found in the cytoplasm. The protein operates within protein biosynthesis; polypeptide chain elongation. Functionally, involved in peptide bond synthesis. Stimulates efficient translation and peptide-bond synthesis on native or reconstituted 70S ribosomes in vitro. Probably functions indirectly by altering the affinity of the ribosome for aminoacyl-tRNA, thus increasing their reactivity as acceptors for peptidyl transferase. This is Elongation factor P from Ehrlichia chaffeensis (strain ATCC CRL-10679 / Arkansas).